Consider the following 497-residue polypeptide: Cytochrome P450 3A18 (497 aa).

Residue cysteine 442 participates in heme binding.

The protein belongs to the cytochrome P450 family. Heme serves as cofactor.

The protein resides in the endoplasmic reticulum membrane. It is found in the microsome membrane. It catalyses the reaction an organic molecule + reduced [NADPH--hemoprotein reductase] + O2 = an alcohol + oxidized [NADPH--hemoprotein reductase] + H2O + H(+). Its function is as follows. Catalyzes 16-beta- and 6-alpha-hydroxylations of testosterone. The polypeptide is Cytochrome P450 3A18 (Cyp3a18) (Rattus norvegicus (Rat)).